Consider the following 894-residue polypeptide: LRR receptor-like serine/threonine-protein kinase IOS1 (894 aa).

The signal sequence occupies residues 1-23 (MAFSSCFLLVLLQIFSALLLCLA). Residues 24-515 (QDQSGFISLD…KKKKNTVIAP (492 aa)) lie on the Extracellular side of the membrane. Asparagine 48, asparagine 95, asparagine 137, asparagine 179, asparagine 223, asparagine 230, asparagine 260, asparagine 287, asparagine 309, asparagine 338, asparagine 399, asparagine 441, asparagine 462, and asparagine 469 each carry an N-linked (GlcNAc...) asparagine glycan. LRR repeat units lie at residues 431–457 (LTSL…NMET) and 459–479 (KLIN…LLDK). A helical membrane pass occupies residues 516–536 (VAASLVSVFLIGAGIVTFLIL). Residues 537 to 894 (KRKKRTKLGL…FTTELNPGAR (358 aa)) lie on the Cytoplasmic side of the membrane. Threonine 577 is subject to Phosphothreonine. Residues 586–858 (NNFERVLGRG…QVVMDLKECL (273 aa)) enclose the Protein kinase domain. Residues 592 to 600 (LGRGGFGVV) and lysine 613 each bind ATP. Position 658 is a phosphotyrosine (tyrosine 658). The Proton acceptor role is filled by aspartate 710. Serine 744 is subject to Phosphoserine. 2 positions are modified to phosphothreonine: threonine 745 and threonine 750. Tyrosine 758 is modified (phosphotyrosine).

Belongs to the protein kinase superfamily. Ser/Thr protein kinase family. As to quaternary structure, homodimerization. Interacts with BAK1 and FLS2; triggers FLS2-BAK1 complex formation upon microbe-associated molecular patterns (MAMPs) treatment. Also binds to CERK1 and EFR. Expressed in roots, cotyledons, leaves, flowers and siliques.

It localises to the cell membrane. In terms of biological role, negatively regulates the abscisic acid (ABA) signaling pathway. Required for full susceptibility to filamentous (hemi)biotrophic oomycetes (e.g. H.arabidopsidis and P.parasitica) and fungal (e.g. E.cruciferarum) pathogens, probably by triggering the repression of ABA-sensitive COLD REGULATED and RESISTANCE TO DESICCATION genes during infection, but independently of immune responses. Involved in BAK1-dependent and BAK1-independent microbe-associated molecular patterns (MAMPs)-triggered immunity (PTI) leading to defense responses, including callose deposition and MAPK cascade activation, toward pathogenic bacteria (e.g. P.syringae). Required for chitin-mediated PTI. The protein is LRR receptor-like serine/threonine-protein kinase IOS1 of Arabidopsis thaliana (Mouse-ear cress).